A 565-amino-acid chain; its full sequence is Periplasmic trehalase (565 aa).

The signal sequence occupies residues 1-30 (MKSPAPSRPQKMALIPACIFLYFAALSVQA). Residues arginine 152, 159 to 160 (WD), asparagine 196, 205 to 207 (RSQ), 277 to 279 (RPE), and glycine 310 each bind substrate. Residues aspartate 312 and glutamate 496 each act as proton donor/acceptor in the active site. Glutamate 511 provides a ligand contact to substrate. The segment at 540–565 (DNVPATHPTVKSATTQPSTKEAQPTP) is disordered. The span at 548-565 (TVKSATTQPSTKEAQPTP) shows a compositional bias: polar residues.

Belongs to the glycosyl hydrolase 37 family. In terms of assembly, monomer.

It localises to the periplasm. It catalyses the reaction alpha,alpha-trehalose + H2O = alpha-D-glucose + beta-D-glucose. Provides the cells with the ability to utilize trehalose at high osmolarity by splitting it into glucose molecules that can subsequently be taken up by the phosphotransferase-mediated uptake system. The chain is Periplasmic trehalase from Shigella flexneri serotype 5b (strain 8401).